The following is a 494-amino-acid chain: Tripartite motif-containing protein 5 (494 aa).

Position 2 is an N-acetylalanine (Ala2). Residues 15 to 59 (CPICLELLTEPLSLDCGHSFCQACITANHKESTLHQGERSCPLCR) form an RING-type zinc finger. Ser86 is subject to Phosphoserine. The segment at 91 to 132 (QKVDHCARHGEKLLLFCQQDGNVICWLCERSQEHRGHHTFLV) adopts a B box-type zinc-finger fold. Residues Cys96, His99, Cys118, and His124 each coordinate Zn(2+). Residues 132–223 (VEEVAEKYQG…RLVQSESDMV (92 aa)) are a coiled coil. Positions 186 to 199 (FKQLRDILDCEESK) are required for interaction with GABARAP and for autophagy. The 215-residue stretch at 280-494 (PDLKGMLQAF…LPMTLCSPSS (215 aa)) folds into the B30.2/SPRY domain.

It belongs to the TRIM/RBCC family. Can form homodimers and homotrimers. In addition to lower-order dimerization, also exhibits a higher-order multimerization and both low- and high-order multimerizations are essential for its restriction activity. Interacts with BTBD1 and BTBD2. Interacts with PSMC4, PSMC5, PSMD7 and HSPA8/HSC70. Interacts (via B30.2/SPRY domain) with HSPA1A/B. Interacts with PSMC2, MAP3K7/TAK1, TAB2 and TAB3. Interacts with SQSTM1. Interacts with TRIM6 and TRIM34. Interacts with ULK1 (phosphorylated form), GABARAP, GABARAPL1, GABARAPL2, MAP1LC3A, MAP1LC3C and BECN1. Degraded in a proteasome-independent fashion in the absence of viral infection but in a proteasome-dependent fashion following exposure to restriction sensitive virus. Post-translationally, autoubiquitinated in a RING finger- and UBE2D2-dependent manner. Monoubiquitinated by TRIM21. Deubiquitinated by Yersinia YopJ. Ubiquitination may not lead to proteasomal degradation.

The protein localises to the cytoplasm. It localises to the nucleus. The catalysed reaction is S-ubiquitinyl-[E2 ubiquitin-conjugating enzyme]-L-cysteine + [acceptor protein]-L-lysine = [E2 ubiquitin-conjugating enzyme]-L-cysteine + N(6)-ubiquitinyl-[acceptor protein]-L-lysine.. It participates in protein modification; protein ubiquitination. In terms of biological role, capsid-specific restriction factor that prevents infection from non-host-adapted retroviruses. Blocks viral replication early in the life cycle, after viral entry but before reverse transcription. In addition to acting as a capsid-specific restriction factor, also acts as a pattern recognition receptor that activates innate immune signaling in response to the retroviral capsid lattice. Binding to the viral capsid triggers its E3 ubiquitin ligase activity, and in concert with the heterodimeric ubiquitin conjugating enzyme complex UBE2V1-UBE2N (also known as UBC13-UEV1A complex) generates 'Lys-63'-linked polyubiquitin chains, which in turn are catalysts in the autophosphorylation of the MAP3K7/TAK1 complex (includes TAK1, TAB2, and TAB3). Activation of the MAP3K7/TAK1 complex by autophosphorylation results in the induction and expression of NF-kappa-B and MAPK-responsive inflammatory genes, thereby leading to an innate immune response in the infected cell. Plays a role in regulating autophagy through activation of autophagy regulator BECN1 by causing its dissociation from its inhibitors BCL2 and TAB2. The polypeptide is Tripartite motif-containing protein 5 (TRIM5) (Cebuella pygmaea (Pygmy marmoset)).